A 109-amino-acid chain; its full sequence is MLEPFQILSICSFILSALHFMAWTIGHLNQIKRGVNMKIRIKGPNKETINREVSILRHSYQKEIQAKETMKEVLSDNMEVLSDHIVIEGLSAEEIIKMGETVLEIEELH.

At M1–P4 the chain is on the virion surface side. The helical; Signal-anchor for type III membrane protein transmembrane segment at F5–H27 threads the bilayer. Residues L28 to H109 lie on the Intravirion side of the membrane. Residues H58 to D83 adopt a coiled-coil conformation.

In terms of assembly, homotetramer. Phosphorylated by host.

Its subcellular location is the virion membrane. It is found in the host cell membrane. Its function is as follows. Forms presumably a highly low-pH gated proton-selective channel. Trp-23 may function as a minimalistic gate that opens and closes the pore. When the environmental pH is lower than a threshold, the BM2 channel would be activated and selectively transport protons across the membrane from the extracellular side to the cytoplasmic side. Crucial for the uncoating process. When the virion is internalized into the endosome, the channel acidifies the virion's interior, promoting the dissociation of matrix protein 1 (M1) from the ribonucleoprotein (RNP) thus allowing the transport of the RNP from the virion into the cell's nucleus. Also plays a role in viral proteins secretory pathway. Elevates the intravesicular pH of normally acidic compartments, such as trans-Golgi network, preventing newly formed hemagglutinin from premature switching to the fusion-active conformation. Plays a crucial role in virion assembly. Expressed in the late phase of the infection. The sequence is that of Matrix protein 2 (M) from Influenza B virus (strain B/Memphis/12/1997).